The sequence spans 91 residues: Alpha-defensin-related sequence 2 (91 aa).

An N-terminal signal peptide occupies residues 1–19; sequence MKKLVLLFALVLLAFQVQA. The propeptide occupies 20–58; it reads DSIQNTDEETKTEEQPGEKDQAVSVSFGDPQGSALQDAA. The tract at residues 22-48 is disordered; that stretch reads IQNTDEETKTEEQPGEKDQAVSVSFGD. Residues 27–40 are compositionally biased toward basic and acidic residues; it reads EETKTEEQPGEKDQ. Tandem repeats lie at residues 65–67, 68–70, 71–73, 74–76, 77–79, 80–82, and 83–85. A 7 X 3 AA tandem repeats of C-P-X region spans residues 65–85; sequence CPQCPRCPSCPSCPRCPRCPR.

Belongs to the alpha-defensin family. Small bowel, spleen, colon, kidney, liver, stomach and femur marrow.

Its subcellular location is the secreted. Apparent precursor of a secreted, cationic, proline- and cysteine-rich peptide that contains Cys-Pro-Xaa repeats. Unlike cryptdin, the proposed mature peptide region lacks the structural motif characteristic of defensins. It may have microbicidal activities. The polypeptide is Alpha-defensin-related sequence 2 (Defa-rs2) (Mus musculus (Mouse)).